Consider the following 95-residue polypeptide: Small ubiquitin-related modifier 2-A (95 aa).

Lysine 11 is covalently cross-linked (Glycyl lysine isopeptide (Lys-Gly) (interchain with G-Cter in SUMO)). One can recognise a Ubiquitin-like domain in the interval 16–95 (DHINLKVAGQ…VFQQQTGGSF (80 aa)). Residue glycine 93 forms a Glycyl lysine isopeptide (Gly-Lys) (interchain with K-? in acceptor proteins) linkage. Residues 94–95 (SF) constitute a propeptide that is removed on maturation.

Belongs to the ubiquitin family. SUMO subfamily. In terms of assembly, interacts with sae2 and ube2i. Covalently attached to a number of proteins, including top2. Post-translationally, polymeric chains can be formed through Lys-11 cross-linking. Cleavage of precursor form by a sentrin-specific protease is necessary for function.

It is found in the nucleus. Ubiquitin-like protein that can be covalently attached to proteins as a monomer or as a lysine-linked polymer. Covalent attachment via an isopeptide bond to its substrates requires prior activation by the E1 complex sae1-sae2 and linkage to the E2 enzyme ube2i, and can be promoted by an E3 ligase such as pias1-4. This post-translational modification on lysine residues of proteins plays a crucial role in a number of cellular processes such as nuclear transport, DNA replication and repair, mitosis and signal transduction. Polymeric sumo2 chains are also susceptible to polyubiquitination which functions as a signal for proteasomal degradation of modified proteins. The polypeptide is Small ubiquitin-related modifier 2-A (sumo2-a) (Xenopus laevis (African clawed frog)).